Here is a 390-residue protein sequence, read N- to C-terminus: Succinate--CoA ligase [ADP-forming] subunit beta (390 aa).

An ATP-grasp domain is found at 9–245 (KHLLKKYNIP…TTQEDEHETM (237 aa)). ATP is bound by residues lysine 46, 53–55 (GRG), glutamate 99, serine 102, and glutamate 107. Mg(2+) contacts are provided by asparagine 200 and aspartate 214. Residues asparagine 265 and 322–324 (GIV) contribute to the substrate site.

It belongs to the succinate/malate CoA ligase beta subunit family. Heterotetramer of two alpha and two beta subunits. The cofactor is Mg(2+).

The enzyme catalyses succinate + ATP + CoA = succinyl-CoA + ADP + phosphate. It carries out the reaction GTP + succinate + CoA = succinyl-CoA + GDP + phosphate. The protein operates within carbohydrate metabolism; tricarboxylic acid cycle; succinate from succinyl-CoA (ligase route): step 1/1. Its function is as follows. Succinyl-CoA synthetase functions in the citric acid cycle (TCA), coupling the hydrolysis of succinyl-CoA to the synthesis of either ATP or GTP and thus represents the only step of substrate-level phosphorylation in the TCA. The beta subunit provides nucleotide specificity of the enzyme and binds the substrate succinate, while the binding sites for coenzyme A and phosphate are found in the alpha subunit. This is Succinate--CoA ligase [ADP-forming] subunit beta from Coxiella burnetii (strain RSA 493 / Nine Mile phase I).